A 373-amino-acid chain; its full sequence is Bilirubin reductase (373 aa).

Residue Gln-92 coordinates FMN. Arg-168 functions as the Proton donor in the catalytic mechanism. Residue Lys-215 coordinates FMN. Residues Cys-344, Cys-347, Cys-351, and Cys-363 each contribute to the [4Fe-4S] cluster site.

Belongs to the NADH:flavin oxidoreductase/NADH oxidase family. FMN is required as a cofactor. [4Fe-4S] cluster serves as cofactor.

It catalyses the reaction urobilinogen + 4 A = (4Z,15Z)-bilirubin IXalpha + 4 AH2. The enzyme catalyses urobilinogen + 2 A = (4Z,15Z)-mesobilirubin IXalpha + 2 AH2. The protein operates within porphyrin-containing compound metabolism; protoheme degradation. In terms of biological role, bilirubin reductase that catalyzes reduction of mesobilirubin and/or bilirubin to urobilinogen, a key step during heme degradation. Cooperates with BilS, which is probably involved in electron transfer for BilR. Urobilinogen then spontaneously degrades into urobilin, which gives urine its distinctive yellow color. This chain is Bilirubin reductase, found in Clostridium symbiosum (strain WAL-14163).